We begin with the raw amino-acid sequence, 541 residues long: MEAPMKLEVKVENYVECGINEDEATPLREGTGETPPHAFACGVPMSGSGWCSDPEDGNLVHHSATPTSDEHLQPSLDTIEPKMEPKIKEDADNAMLDSLLADPFENNSPATLQTPADVKPNAMLDSVEQGSRSCELLPSEFSKRENLDDMDLFSLKAAKTLVPDEQQSFPQNDTPIDDPEAADLIAQKREILKMLEMTAENRKVKHKKKKHKKERSHRSNKHQEESRKRNHSNSSSDEGADDKNQFDCDYRGHKKYKNRRGSASSQNESSKERKLRDTELDYVPVRPDEHFIRPIKFSNLIERRPPQVEFNTVNLSKADKRSLAVARAELVLEQIQQKANKEEPPEFHMVDTICKLPVNESFRNQDCFENPSPICNNMNVVYKFNSTPGTRIDLSKWGLETVPEATKRLLRLLGIDVARLKELQSTVKPSQRILKLKKEQLEQGLAPTEEQETATLYKNAATQTERRTATRDAGTQVRLESKLNGAFWQNPHFDPMNLTQHQSNVMLALQEIYQTLPSATMAVKLSRALAPALAIIKGRQP.

The segment at 1–169 (MEAPMKLEVK…TLVPDEQQSF (169 aa)) is interaction with Piwi. 2 disordered regions span residues 52–75 (SDPEDGNLVHHSATPTSDEHLQPS) and 198–281 (TAEN…TELD). Residues 194-216 (MLEMTAENRKVKHKKKKHKKERS) are a coiled coil. A compositionally biased stretch (basic residues) spans 203–220 (KVKHKKKKHKKERSHRSN). Composition is skewed to basic and acidic residues over residues 241 to 251 (DDKNQFDCDYR) and 269 to 279 (SSKERKLRDTE). Positions 315–343 (LSKADKRSLAVARAELVLEQIQQKANKEE) are nxf2-interacting region (NIR). Residues 323 to 343 (LAVARAELVLEQIQQKANKEE) are a coiled coil. Positions 387 to 446 (TPGTRIDLSKWGLETVPEATKRLLRLLGIDVARLKELQSTVKPSQRILKLKKEQLEQGLA) are necessary for interaction with nxf2 and protein stability.

As to quaternary structure, in the ovaries, part of a complex composed of at least Panx, nxf2, piwi and Nxt1. The complex is knowns as Panx-induced cotranscriptional silencing (PICTS) complex, Panx-nxf2-dependent TAP/p15 silencing (Pandas complex), SFiNX (silencing factor interacting nuclear export variant) or piwi-Panx-nxf2-p15 (PPNP) complex. Interacts (via NIR region) with nxf2 (via TAP-C domain); the interaction is direct. Expressed in female gonads (at protein level).

The protein resides in the nucleus. Functionally, acts via the piwi-interacting RNA (piRNA) pathway which mediates the repression of transposable elements during meiosis by forming complexes composed of piRNAs and piwi proteins and governs the methylation and subsequent repression of transposons. Required for transcriptional silencing of transposons targeted by piwi and confers its effects by interacting with nascent RNA transcripts. Likely to be recruited to nascent transcripts cotranscriptionally by piwi and to recruit additional factors involved in transcriptional silencing. In the ovaries, forms a complex with nxf2, piwi and Nxt1 which acts as effectors of cotranscriptional transposon silencing. The interaction with nxf2 stabilizes the nuclear protein complex. The chain is Protein panoramix from Drosophila melanogaster (Fruit fly).